A 718-amino-acid chain; its full sequence is MRLSLWNLLGLSGLVVASCPYMSGEDQEYHISHIQARGTDSEFLDQFKVEDSNSYLTTDAGGPIQDDASLKAGERGPTLLEDFIFRQKIQHFDHERVPERAVHARGAGAYGTFTSYADWTNITAASFLNSKGKETPVFVRFSTVAGSRGSADTVRDVHGFATRFYTDEGNFDIVGNNIPVFFIQDAILFPDLVHAVKPSPDSEIPQAATGHDSAWDFFSQQPSTLHTLFWAMSGHGIPRSYRHMDGFGVHTMRLVTDDGKSKLVKWHWKTKQGKASLVWEEAQILAGKNPDFHRQDLWDDINAGNGPEWELGVQIVDEEDVQAFGFDLLDPTKFLPEELVPVTILGKMKLTDNPTNYFAETEQVMFQPGHIVRGVDFSDDPLLQGRIYSYLDTQLNRNGGPNFEQLPVNRPRTKVHNNNRDGAGQMFIHTNKAPYSPNSLSGGNPKQANQTKGRGFFTAPSRKVVGSLHRGTASSFADVWSQPRMFYNSLIPSEQQFLVNAIRFEISQLKSDLIKKNTLMQLNRVSNDLATRVAAVIGYKPLDPSPEFYTNATTDYVTIFGKPLPSVVGFTVGILASTSSSTSISQAAQLATSFSSRGIRAVIVGESLLSGTDQTYSSADATAFDAVVVTMGAETLFGPVAKPNTLFPSGRPSQILHDAYRWGKPVGAVSKASVVLEPLPGTKNQGGVYRVESVNELATSIAKGLETFRFVDRFPLDS.

Residues H103 and N176 contribute to the active site. Y390 is a binding site for heme.

It belongs to the catalase family. Heme is required as a cofactor.

It is found in the peroxisome matrix. It carries out the reaction 2 H2O2 = O2 + 2 H2O. Its function is as follows. Catalyzes the degradation of hydrogen peroxide (H(2)O(2)) generated by peroxisomal oxidases to water and oxygen, thereby protecting cells from the toxic effects of hydrogen peroxide. The polypeptide is Catalase (CAT1) (Blumeria hordei (Barley powdery mildew)).